We begin with the raw amino-acid sequence, 722 residues long: Polyribonucleotide nucleotidyltransferase (722 aa).

Positions 495 and 501 each coordinate Mg(2+). Residues 562-621 (PRLLSFRIDPELIGTVIGPGGRTIKGITERTNTKIDIEDGGIVTIASHDGAAAEEAQRII) enclose the KH domain. In terms of domain architecture, S1 motif spans 631 to 699 (GEIFPGSITR…NRGRINLTLR (69 aa)). The tract at residues 700 to 722 (GVSQNGGMSNYPEPTPTPVAPLT) is disordered. Pro residues predominate over residues 712–722 (EPTPTPVAPLT).

The protein belongs to the polyribonucleotide nucleotidyltransferase family. The cofactor is Mg(2+).

Its subcellular location is the cytoplasm. The catalysed reaction is RNA(n+1) + phosphate = RNA(n) + a ribonucleoside 5'-diphosphate. Involved in mRNA degradation. Catalyzes the phosphorolysis of single-stranded polyribonucleotides processively in the 3'- to 5'-direction. This Prochlorococcus marinus (strain NATL1A) protein is Polyribonucleotide nucleotidyltransferase.